The primary structure comprises 248 residues: Isoprenyl transferase (248 aa).

Asp-23 is an active-site residue. Position 23 (Asp-23) interacts with Mg(2+). Residues 24-27 (GNGR), Trp-28, Arg-36, His-40, and 68-70 (STE) each bind substrate. Asn-71 (proton acceptor) is an active-site residue. Substrate contacts are provided by residues Trp-72, Arg-74, Arg-185, and 191–193 (RIS). Residue Glu-204 participates in Mg(2+) binding.

The protein belongs to the UPP synthase family. Homodimer. Mg(2+) serves as cofactor.

Functionally, catalyzes the condensation of isopentenyl diphosphate (IPP) with allylic pyrophosphates generating different type of terpenoids. The sequence is that of Isoprenyl transferase from Neisseria meningitidis serogroup A / serotype 4A (strain DSM 15465 / Z2491).